The sequence spans 129 residues: Trefoil factor 2 (129 aa).

The first 23 residues, 1-23, serve as a signal peptide directing secretion; sequence MGPRGLQLLAVLLALGLCAPAGA. Glutamine 24 is modified (pyrrolidone carboxylic acid). 2 P-type domains span residues 29 to 73 and 79 to 122; these read CQCS…FHPL and EQCV…FFPI. Disulfide bonds link cysteine 29/cysteine 127, cysteine 31/cysteine 58, cysteine 42/cysteine 57, cysteine 52/cysteine 69, cysteine 81/cysteine 107, cysteine 91/cysteine 106, and cysteine 101/cysteine 118.

It localises to the secreted. In terms of biological role, inhibits gastrointestinal motility and gastric acid secretion. Could function as a structural component of gastric mucus, possibly by stabilizing glycoproteins in the mucus gel through interactions with carbohydrate side chains. The polypeptide is Trefoil factor 2 (TFF2) (Canis lupus familiaris (Dog)).